Consider the following 303-residue polypeptide: MVQDRLFQKAISVLLIAGYEVSERCAIRPRSFDLIAEKGGLLLIIKVSSPIDNVSEEIARDLDLIAGHLEGSPLIIGGRARDTDLERGAVYLRYGIIAINPETLYDYLVDGIPPLVYASPGGLYVNINGDVLRGLREQRNMSLGDLGAVLGVSRRTISKYESGMGTTLEIAIKIEEVFDSGVIESIDLLKYTSHFANKPQERLPVQALAVLERIGLELHALRRAPFQALATFEGEMILTGYGTAQKVVKRAGLIGNLSAITHTHAMCVAIDGSIRKKVGQTLIIGEEELHDIEDGEELIELFD.

In terms of domain architecture, HTH cro/C1-type spans 132-189 (LRGLREQRNMSLGDLGAVLGVSRRTISKYESGMGTTLEIAIKIEEVFDSGVIESIDLL). The segment at residues 143–162 (LGDLGAVLGVSRRTISKYES) is a DNA-binding region (H-T-H motif).

In Methanosphaerula palustris (strain ATCC BAA-1556 / DSM 19958 / E1-9c), this protein is Putative HTH-type transcriptional regulatory protein Mpal_0031.